Here is a 490-residue protein sequence, read N- to C-terminus: Sushi domain-containing protein 4 (490 aa).

Residues 1–21 are disordered; sequence MYHGMNPSNGDGFLEQQQQQQ. The signal sequence occupies residues 1–41; the sequence is MYHGMNPSNGDGFLEQQQQQQQPQSPQRLLAVILWFQLALC. Over 42 to 319 the chain is Extracellular; that stretch reads FGPAQLTGGF…PSTHETLLTT (278 aa). Sushi domains are found at residues 55 to 119, 120 to 179, 178 to 239, and 241 to 304; these read QVCA…ICVQ, EDCR…ICQG, QGCL…RCLA, and EVCP…YCIK. 8 disulfides stabilise this stretch: cysteine 57–cysteine 99, cysteine 85–cysteine 117, cysteine 122–cysteine 165, cysteine 147–cysteine 177, cysteine 180–cysteine 224, cysteine 210–cysteine 237, cysteine 243–cysteine 289, and cysteine 274–cysteine 302. 2 N-linked (GlcNAc...) asparagine glycosylation sites follow: asparagine 104 and asparagine 134. An N-linked (GlcNAc...) asparagine glycan is attached at asparagine 192. Residues 320–340 form a helical membrane-spanning segment; the sequence is WKIVAFTATSVLLVLLLVILA. Residues 341 to 490 lie on the Cytoplasmic side of the membrane; that stretch reads RMFQTKFKAH…DEIPLMEEDP (150 aa). Residues 401–490 form a disordered region; sequence GCPLPVDDQS…DEIPLMEEDP (90 aa). The segment covering 430-456 has biased composition (polar residues); the sequence is CDSVSGSSELLQSLYSPPRCQESTHPA. Residues 479–490 are compositionally biased toward acidic residues; sequence IADEIPLMEEDP.

In terms of tissue distribution, isoform 3 is the predominant isoform in all tissues except cortex, cerebellum, kidney, and breast. Isoform 1 is found primarily in the esophagus and the brain.

The protein localises to the membrane. It is found in the secreted. Functionally, acts as a complement inhibitor by disrupting the formation of the classical C3 convertase. Isoform 3 inhibits the classical complement pathway, while membrane-bound isoform 1 inhibits deposition of C3b via both the classical and alternative complement pathways. The sequence is that of Sushi domain-containing protein 4 (SUSD4) from Homo sapiens (Human).